The following is a 1091-amino-acid chain: Integrin alpha-6 (1091 aa).

An N-terminal signal peptide occupies residues 1 to 23; that stretch reads MAVAGQLCLLYLSAGLLARLGTA. The Extracellular segment spans residues 24–1011; it reads FNLDTREDNV…FPSKTVAQYS (988 aa). 7 FG-GAP repeats span residues 30–95, 101–166, 176–229, 244–300, 301–363, 364–419, and 420–479; these read EDNV…GPCT, NDAD…IEDD, DGRL…FFDM, DHDE…KSAH, LLPE…KWSN, VKPI…GIIT, and KPTQ…VTPN. Asparagine 78 carries an N-linked (GlcNAc...) asparagine glycan. Intrachain disulfides connect cysteine 86–cysteine 94, cysteine 131–cysteine 154, and cysteine 175–cysteine 188. N-linked (GlcNAc...) asparagine glycosylation is found at asparagine 223 and asparagine 284. Residues aspartate 324, asparagine 326, aspartate 328, and aspartate 332 each coordinate Ca(2+). Asparagine 370 is a glycosylation site (N-linked (GlcNAc...) asparagine). Aspartate 386, asparagine 388, aspartate 390, tyrosine 392, aspartate 394, aspartate 441, aspartate 443, asparagine 445, tyrosine 447, and aspartate 449 together coordinate Ca(2+). 4 disulfides stabilise this stretch: cysteine 489-cysteine 496, cysteine 502-cysteine 562, cysteine 626-cysteine 632, and cysteine 726-cysteine 737. N-linked (GlcNAc...) asparagine glycans are attached at residues asparagine 731, asparagine 746, and asparagine 927. Disulfide bonds link cysteine 881-cysteine 928 and cysteine 934-cysteine 939. Asparagine 958 carries N-linked (GlcNAc...) asparagine glycosylation. Residues 1012–1037 form a helical membrane-spanning segment; sequence GVAWWIILLAVLAGILMLALLVFLLW. Topologically, residues 1038–1091 are cytoplasmic; that stretch reads KCGFFKRSRYDDSIPRYHAVRIRKEEREIKDEKHMDNLEKKQWITKWNENESYS. The S-palmitoyl cysteine; by DHHC3 moiety is linked to residue cysteine 1039. The GFFKR motif motif lies at 1040 to 1044; it reads GFFKR. Residue arginine 1064 is modified to Phosphoserine.

This sequence belongs to the integrin alpha chain family. Heterodimer of an alpha and a beta subunit. The alpha subunit is composed of a heavy and a light chain linked by a disulfide bond. Alpha-6 associates with either beta-1 (ITGB1) or beta-4 (ITGB4) to form ITGA6:ITGB1 and ITGA6:ITGB4, respectively. ITGA6:ITGB1 is found in a complex with CD9; interaction takes place in oocytes and is involved in sperm-egg fusion. ITGA6:ITGB4 is found in a ternary complex with NRG1 and ERBB3. ITGA6:ITGB4 is found in a ternary complex with IGF1 and IGF1R. ITGA6:ITGB4 interacts with IGF2. Interacts with ADAM9. Interacts with RAB21. Interacts with MDK. ITGA6:ITGB1 interacts with MDK; this interaction mediates MDK-induced neurite outgrowth. Interacts with CD82; this interaction down-regulates ITGA6-mediated cell adhesion. Isoforms containing segment A, but not segment B, are the major targets for PMA-induced phosphorylation. Phosphorylation occurs on 'Ser-1064' of isoform alpha-6X1A. Phosphorylation is not required for the induction of integrin alpha-6A/beta-1 high affinity but may reduce the affinity for ligand. Post-translationally, undergoes PLAU-mediated cleavage at residues Arg-595-596-Arg in a time-dependent manner to produce processed integrin alpha-6 (alpha6p). In terms of processing, palmitoylation by DHHC3 enhances stability and cell surface expression. As to expression, expressed at low levels in normal skin tissue with elevated levels in skin tumors.

It localises to the cell membrane. Functionally, integrin alpha-6/beta-1 (ITGA6:ITGB1) is a receptor for laminin on platelets. Integrin alpha-6/beta-1 (ITGA6:ITGB1) is present in oocytes and is involved in sperm-egg fusion. Integrin alpha-6/beta-4 (ITGA6:ITGB4) is a receptor for laminin in epithelial cells and it plays a critical structural role in the hemidesmosome. ITGA6:ITGB4 binds to NRG1 (via EGF domain) and this binding is essential for NRG1-ERBB signaling. ITGA6:ITGB4 binds to IGF1 and this binding is essential for IGF1 signaling. ITGA6:ITGB4 binds to IGF2 and this binding is essential for IGF2 signaling. The chain is Integrin alpha-6 (Itga6) from Mus musculus (Mouse).